The following is an 814-amino-acid chain: DNA gyrase subunit A (814 aa).

The 468-residue stretch at 32 to 499 (LPDVRDGLKP…GVIEFREEDL (468 aa)) folds into the Topo IIA-type catalytic domain. Catalysis depends on tyrosine 120, which acts as the O-(5'-phospho-DNA)-tyrosine intermediate. The short motif at 526–532 (QHRAGRG) is the GyrA-box element.

This sequence belongs to the type II topoisomerase GyrA/ParC subunit family. As to quaternary structure, heterotetramer, composed of two GyrA and two GyrB chains. In the heterotetramer, GyrA contains the active site tyrosine that forms a transient covalent intermediate with DNA, while GyrB binds cofactors and catalyzes ATP hydrolysis.

The protein localises to the cytoplasm. It carries out the reaction ATP-dependent breakage, passage and rejoining of double-stranded DNA.. A type II topoisomerase that negatively supercoils closed circular double-stranded (ds) DNA in an ATP-dependent manner to modulate DNA topology and maintain chromosomes in an underwound state. Negative supercoiling favors strand separation, and DNA replication, transcription, recombination and repair, all of which involve strand separation. Also able to catalyze the interconversion of other topological isomers of dsDNA rings, including catenanes and knotted rings. Type II topoisomerases break and join 2 DNA strands simultaneously in an ATP-dependent manner. The protein is DNA gyrase subunit A of Dehalogenimonas lykanthroporepellens (strain ATCC BAA-1523 / JCM 15061 / BL-DC-9).